A 375-amino-acid chain; its full sequence is MESLSEGTTAGYQQIHDGIIHLVDSARTETVRSVNALMTATYQEIGRRIVEFEQGGEARAAYGAQLIKRLSKDLCLRYKRGFSAKNLRQMRLFYLFFQHVEIHQTMSGELTPLGIPQTPSAEFPSAKIWQTLSAKSFPLPRSTYVRLLSVKNADARSFYEKETLRCGWSVRQLERQIATQFYERTLLSHDKSAMLQQHAPAETHILPQQAIRDPFVLEFLELKDEYSESDFEEALINHLMDFMLELGDDFAFVGRQRRLRIDDNWFRVDLLFFHRRLRCLLIVDLKVGKFSYSDAGQMNMYLNYAKEHWTLPDENPPIGLVLCAEKGAGEAHYALAGLPNTVLASEYKMQLPDEKRLADELVRTQAVLEEGYRRR.

Interacts with DNA processing enzymes, including the restriction complex HsdMRS, the integrases IntF and IntS, and the recombinase PinE.

In terms of biological role, may be a nuclease involved in DNA recombination and repair. The chain is Putative nuclease YhcG (yhcG) from Escherichia coli (strain K12).